The chain runs to 298 residues: Ribosomal RNA small subunit methyltransferase H (298 aa).

S-adenosyl-L-methionine contacts are provided by residues Gly-35–His-37, Asp-55, Phe-82, Asp-100, and Gln-107.

It belongs to the methyltransferase superfamily. RsmH family.

Its subcellular location is the cytoplasm. It catalyses the reaction cytidine(1402) in 16S rRNA + S-adenosyl-L-methionine = N(4)-methylcytidine(1402) in 16S rRNA + S-adenosyl-L-homocysteine + H(+). In terms of biological role, specifically methylates the N4 position of cytidine in position 1402 (C1402) of 16S rRNA. This chain is Ribosomal RNA small subunit methyltransferase H, found in Chlamydia felis (strain Fe/C-56) (Chlamydophila felis).